We begin with the raw amino-acid sequence, 204 residues long: Thymidylate kinase (204 aa).

12–19 lines the ATP pocket; the sequence is GVDGAGKS.

This sequence belongs to the thymidylate kinase family.

It catalyses the reaction dTMP + ATP = dTDP + ADP. Its function is as follows. Phosphorylation of dTMP to form dTDP in both de novo and salvage pathways of dTTP synthesis. This Thiobacillus denitrificans (strain ATCC 25259 / T1) protein is Thymidylate kinase.